We begin with the raw amino-acid sequence, 99 residues long: Malonate decarboxylase acyl carrier protein (99 aa).

O-(phosphoribosyl dephospho-coenzyme A)serine is present on S25.

It belongs to the MdcC family. In terms of processing, covalently binds the prosthetic group of malonate decarboxylase.

It is found in the cytoplasm. In terms of biological role, subunit of malonate decarboxylase, it is an acyl carrier protein to which acetyl and malonyl thioester residues are bound via a 2'-(5''-phosphoribosyl)-3'-dephospho-CoA prosthetic group and turn over during the catalytic mechanism. This chain is Malonate decarboxylase acyl carrier protein, found in Pseudomonas savastanoi pv. phaseolicola (strain 1448A / Race 6) (Pseudomonas syringae pv. phaseolicola (strain 1448A / Race 6)).